The sequence spans 445 residues: Argininosuccinate synthase (445 aa).

Residues Ala-17 to Ser-25 and Ala-43 each bind ATP. Position 99 (Tyr-99) interacts with L-citrulline. ATP-binding residues include Gly-129 and Thr-131. The L-aspartate site is built by Thr-131, Asn-135, and Asp-136. Residue Asn-135 coordinates L-citrulline. An ATP-binding site is contributed by Asp-136. 2 residues coordinate L-citrulline: Arg-139 and Ser-192. Asp-194 contacts ATP. L-citrulline-binding residues include Thr-201, Glu-203, and Glu-280.

It belongs to the argininosuccinate synthase family. Type 2 subfamily. Homotetramer.

The protein resides in the cytoplasm. The catalysed reaction is L-citrulline + L-aspartate + ATP = 2-(N(omega)-L-arginino)succinate + AMP + diphosphate + H(+). The protein operates within amino-acid biosynthesis; L-arginine biosynthesis; L-arginine from L-ornithine and carbamoyl phosphate: step 2/3. This is Argininosuccinate synthase from Bordetella petrii (strain ATCC BAA-461 / DSM 12804 / CCUG 43448).